A 374-amino-acid polypeptide reads, in one-letter code: ATPase ASNA1 homolog (374 aa).

An ATP-binding site is contributed by lysine 44 to threonine 51. Aspartate 73 is a catalytic residue. Residues glutamate 244 and asparagine 271 each contribute to the ATP site.

This sequence belongs to the arsA ATPase family. As to quaternary structure, homodimer.

It localises to the cytoplasm. Its subcellular location is the endoplasmic reticulum. Its function is as follows. ATPase required for the post-translational delivery of tail-anchored (TA) proteins to the endoplasmic reticulum. Recognizes and selectively binds the transmembrane domain of TA proteins in the cytosol. This complex then targets to the endoplasmic reticulum by membrane-bound receptors, where the tail-anchored protein is released for insertion. This process is regulated by ATP binding and hydrolysis. ATP binding drives the homodimer towards the closed dimer state, facilitating recognition of newly synthesized TA membrane proteins. ATP hydrolysis is required for insertion. Subsequently, the homodimer reverts towards the open dimer state, lowering its affinity for the membrane-bound receptor, and returning it to the cytosol to initiate a new round of targeting. The chain is ATPase ASNA1 homolog from Plasmodium vivax (strain Salvador I).